A 121-amino-acid chain; its full sequence is uncharacterized protein (121 aa).

The segment at 101–121 (TVVKKEDVRESPVDTFMENAT) is disordered. A compositionally biased stretch (basic and acidic residues) spans 102–112 (VVKKEDVRESP).

This is an uncharacterized protein from Schizosaccharomyces pombe (strain 972 / ATCC 24843) (Fission yeast).